The primary structure comprises 230 residues: Cytidylate kinase (230 aa).

ATP is bound at residue 12-20 (GPSGAGKGT).

The protein belongs to the cytidylate kinase family. Type 1 subfamily.

The protein resides in the cytoplasm. It carries out the reaction CMP + ATP = CDP + ADP. The catalysed reaction is dCMP + ATP = dCDP + ADP. The polypeptide is Cytidylate kinase (Shewanella piezotolerans (strain WP3 / JCM 13877)).